The primary structure comprises 525 residues: GMP synthase [glutamine-hydrolyzing] (525 aa).

The Glutamine amidotransferase type-1 domain maps to lysine 9–leucine 207. Catalysis depends on cysteine 86, which acts as the Nucleophile. Active-site residues include histidine 181 and glutamate 183. Residues tryptophan 208–arginine 400 enclose the GMPS ATP-PPase domain. Serine 235–serine 241 serves as a coordination point for ATP.

As to quaternary structure, homodimer.

The catalysed reaction is XMP + L-glutamine + ATP + H2O = GMP + L-glutamate + AMP + diphosphate + 2 H(+). Its pathway is purine metabolism; GMP biosynthesis; GMP from XMP (L-Gln route): step 1/1. In terms of biological role, catalyzes the synthesis of GMP from XMP. The polypeptide is GMP synthase [glutamine-hydrolyzing] (Marinomonas sp. (strain MWYL1)).